The primary structure comprises 416 residues: Putative serine protease HhoB (416 aa).

The signal sequence occupies residues 1–25 (MAIHLKASHLGVAVLLLLFGGAIGA). The span at 35–53 (GQNHSSPDSPVNTSPQSLT) shows a compositional bias: polar residues. Residues 35–57 (GQNHSSPDSPVNTSPQSLTPAPV) form a disordered region. Positions 320–398 (EMTKQLRTSG…PLAIAVKRGQ (79 aa)) constitute a PDZ domain.

The protein belongs to the peptidase S1C family.

A putative protease, its function overlaps that of the related putative proteases HtrA and HhoA. In Synechocystis sp. (strain ATCC 27184 / PCC 6803 / Kazusa), this protein is Putative serine protease HhoB (hhoB).